The following is an 888-amino-acid chain: Bifunctional uridylyltransferase/uridylyl-removing enzyme (888 aa).

Positions 1–348 (MATTTDKQVS…YHFAEDKIEP (348 aa)) are uridylyltransferase. The tract at residues 349 to 709 (INPRFRIINN…LQPTTSRGAT (361 aa)) is uridylyl-removing. Residues 468–590 (VDEHTILVIR…VGTQQRLDYL (123 aa)) enclose the HD domain. 2 ACT domains span residues 710-787 (ELII…DDTM) and 817-888 (ELSI…NIEQ).

The protein belongs to the GlnD family. Mg(2+) is required as a cofactor.

The catalysed reaction is [protein-PII]-L-tyrosine + UTP = [protein-PII]-uridylyl-L-tyrosine + diphosphate. The enzyme catalyses [protein-PII]-uridylyl-L-tyrosine + H2O = [protein-PII]-L-tyrosine + UMP + H(+). Uridylyltransferase (UTase) activity is inhibited by glutamine, while glutamine activates uridylyl-removing (UR) activity. In terms of biological role, modifies, by uridylylation and deuridylylation, the PII regulatory proteins (GlnB and homologs), in response to the nitrogen status of the cell that GlnD senses through the glutamine level. Under low glutamine levels, catalyzes the conversion of the PII proteins and UTP to PII-UMP and PPi, while under higher glutamine levels, GlnD hydrolyzes PII-UMP to PII and UMP (deuridylylation). Thus, controls uridylylation state and activity of the PII proteins, and plays an important role in the regulation of nitrogen assimilation and metabolism. This is Bifunctional uridylyltransferase/uridylyl-removing enzyme from Hydrogenovibrio crunogenus (strain DSM 25203 / XCL-2) (Thiomicrospira crunogena).